Reading from the N-terminus, the 296-residue chain is Sulfotransferase 1C2 (296 aa).

49 to 54 (KSGTTW) is a binding site for 3'-phosphoadenylyl sulfate. 107-109 (RTH) serves as a coordination point for substrate. Residue His-109 is the Proton acceptor of the active site. Residues Arg-131, Ser-139, Tyr-194, and 228-233 (TSFEKM) contribute to the 3'-phosphoadenylyl sulfate site. At Ser-139 the chain carries Phosphoserine. Ser-254 is modified (phosphoserine). 256–260 (FMRKG) contacts 3'-phosphoadenylyl sulfate.

Belongs to the sulfotransferase 1 family. Highly expressed in kidney and at lower levels in stomach and liver. More specifically found in the epithelia of proximal tubules of the kidney, of the bile duct, of the gastric mucosa, and in hepatocytes.

Its subcellular location is the cytoplasm. The protein localises to the lysosome. The protein resides in the mitochondrion. It catalyses the reaction a phenol + 3'-phosphoadenylyl sulfate = an aryl sulfate + adenosine 3',5'-bisphosphate + H(+). The catalysed reaction is cholesterol + 3'-phosphoadenylyl sulfate = cholesterol sulfate + adenosine 3',5'-bisphosphate + H(+). Its function is as follows. Sulfotransferase that utilizes 3'-phospho-5'-adenylyl sulfate (PAPS) to catalyze the sulfate conjugation of phenolic compounds. Does not transfer sulfate to steroids, dopamine, acetaminophen, or alpha-naphthol. Except in mitochondria, where it can add sulfate to cholesterol producing cholesterol sulfate, which alters mitochondrial membrane organization, and impacts protein complex mobility increasing state-III respiration, thereby modulating mitochondrial respiration. Catalyzes the sulfation of the carcinogenic N-hydroxy-2-acetylaminofluorene leading to highly reactive intermediates capable of forming DNA adducts, potentially resulting in mutagenesis. The sequence is that of Sulfotransferase 1C2 (Sult1c2) from Rattus norvegicus (Rat).